Reading from the N-terminus, the 307-residue chain is Cyclooctat-9-en-7-ol synthase (307 aa).

Mg(2+) contacts are provided by aspartate 110, asparagine 220, serine 224, and glutamate 228. The DDXXD motif; degenerate signature appears at 110–113 (DDMD). The NSE/DTE motif signature appears at 220–228 (NDFYSYDRE).

The protein belongs to the terpene synthase family. In terms of assembly, homodimer. Requires Mg(2+) as cofactor.

The enzyme catalyses geranylgeranyl diphosphate + H2O = cyclooctat-9-en-7-ol + diphosphate. Its function is as follows. Catalyzes the cyclization of the linear isoprenoid intermediate geranylgeranyl diphosphate to tricycclic cyclooctat-9-en-7-ol in the cyclooctatin biosynthesis pathway. Cyclooctatin is a potent inhibitor of lysophospholipase. This Streptomyces melanosporofaciens protein is Cyclooctat-9-en-7-ol synthase.